Consider the following 238-residue polypeptide: Ribosomal RNA small subunit methyltransferase G (238 aa).

S-adenosyl-L-methionine is bound by residues Gly78, Phe83, 129–130 (AE), and Arg148. A disordered region spans residues 216–238 (EKKKETPKKYPRKAGTPAKNPIK).

Belongs to the methyltransferase superfamily. RNA methyltransferase RsmG family.

The protein resides in the cytoplasm. Its function is as follows. Specifically methylates the N7 position of a guanine in 16S rRNA. This chain is Ribosomal RNA small subunit methyltransferase G, found in Lactococcus lactis subsp. lactis (strain IL1403) (Streptococcus lactis).